The sequence spans 375 residues: Peptidyl-prolyl cis-trans isomerase D (375 aa).

The PPIase cyclophilin-type domain occupies 7-169 (YFDITIANEP…QEVTISSAGV (163 aa)). 3 TPR repeats span residues 217–250 (AGKL…LDVH), 270–307 (LPLL…PNLS), and 312–345 (GKAL…VPGD).

Belongs to the cyclophilin-type PPIase family. PPIase D subfamily.

Its subcellular location is the cytoplasm. It catalyses the reaction [protein]-peptidylproline (omega=180) = [protein]-peptidylproline (omega=0). Its function is as follows. PPIases accelerate the folding of proteins. It catalyzes the cis-trans isomerization of proline imidic peptide bonds in oligopeptides. The sequence is that of Peptidyl-prolyl cis-trans isomerase D (CPR6) from Cryptococcus neoformans var. neoformans serotype D (strain B-3501A) (Filobasidiella neoformans).